The sequence spans 299 residues: Probable alpha-L-glutamate ligase (299 aa).

One can recognise an ATP-grasp domain in the interval 104–287; sequence LQLLAREGIE…VSGKIIEFLE (184 aa). Residues Lys-141, 178 to 179, Asp-187, and 211 to 213 each bind ATP; these read EF and RSN. Mg(2+) is bound by residues Asp-248, Glu-260, and Asn-262. Residues Asp-248, Glu-260, and Asn-262 each coordinate Mn(2+).

The protein belongs to the RimK family. It depends on Mg(2+) as a cofactor. Mn(2+) is required as a cofactor.

This chain is Probable alpha-L-glutamate ligase, found in Trichodesmium erythraeum (strain IMS101).